We begin with the raw amino-acid sequence, 342 residues long: Phosphate acyltransferase (342 aa).

Belongs to the PlsX family. As to quaternary structure, homodimer. Probably interacts with PlsY.

The protein resides in the cytoplasm. The enzyme catalyses a fatty acyl-[ACP] + phosphate = an acyl phosphate + holo-[ACP]. It functions in the pathway lipid metabolism; phospholipid metabolism. Its function is as follows. Catalyzes the reversible formation of acyl-phosphate (acyl-PO(4)) from acyl-[acyl-carrier-protein] (acyl-ACP). This enzyme utilizes acyl-ACP as fatty acyl donor, but not acyl-CoA. In Shewanella loihica (strain ATCC BAA-1088 / PV-4), this protein is Phosphate acyltransferase.